The following is a 250-amino-acid chain: 2,3-bisphosphoglycerate-dependent phosphoglycerate mutase (250 aa).

Substrate contacts are provided by residues arginine 8–asparagine 15, threonine 21–glycine 22, arginine 60, glutamate 87–tyrosine 90, lysine 98, arginine 114–arginine 115, and glycine 183–asparagine 184. Histidine 9 acts as the Tele-phosphohistidine intermediate in catalysis. The active-site Proton donor/acceptor is glutamate 87.

The protein belongs to the phosphoglycerate mutase family. BPG-dependent PGAM subfamily. Homodimer.

It carries out the reaction (2R)-2-phosphoglycerate = (2R)-3-phosphoglycerate. The protein operates within carbohydrate degradation; glycolysis; pyruvate from D-glyceraldehyde 3-phosphate: step 3/5. In terms of biological role, catalyzes the interconversion of 2-phosphoglycerate and 3-phosphoglycerate. The chain is 2,3-bisphosphoglycerate-dependent phosphoglycerate mutase from Nitratidesulfovibrio vulgaris (strain ATCC 29579 / DSM 644 / CCUG 34227 / NCIMB 8303 / VKM B-1760 / Hildenborough) (Desulfovibrio vulgaris).